A 650-amino-acid chain; its full sequence is Sterol O-acyltransferase 2 (650 aa).

Residues 41–79 are disordered; the sequence is LTSSNNSCASEHEGEGEGEDERPATTSSAPTQNHSAGDV. Residues 64–75 are compositionally biased toward polar residues; the sequence is ATTSSAPTQNHS. 5 consecutive transmembrane segments (helical) span residues 223–243, 300–320, 412–432, 450–470, and 493–513; these read FSGL…KALI, TGWA…MYLT, INVS…QIEY, IFGT…PVAM, and LLVD…YLIW. The FYXDWWN motif motif lies at 531 to 537; it reads FYGDWWN. A run of 2 helical transmembrane segments spans residues 575–595 and 630–650; these read ATLM…YVIF and VIFW…YLTF. His-587 is an active-site residue.

The protein belongs to the membrane-bound acyltransferase family. Sterol o-acyltransferase subfamily.

Its subcellular location is the endoplasmic reticulum membrane. Sterol O-acyltransferase that catalyzes the formation of stery esters. This is Sterol O-acyltransferase 2 (ARE2) from Saccharomyces uvarum (strain ATCC 76518 / CBS 7001 / CLIB 283 / NBRC 10550 / MCYC 623 / NCYC 2669 / NRRL Y-11845) (Yeast).